The sequence spans 619 residues: MDDSVSFIAKEASPAQYSHSLHERTHSEKQKRDFTITEKQDEVSGQTAEPRRTDSKSILQRKCKEFFDSFKRQLPPDRNSELESQEKNNLTKSIKSRHLVMISLGTGIGTGLLVGNGQVLGTAGPAGLVLGYGIASIMLYCIIQAAGELGLCYAGLTGNYTRYPSILVDPSLGFAVSVVYTIQWLTVLPLQLVTAAMTVKYWTSVNADIFVAVVFVFVIIINLFGSRGYAEAEFIFNSCKILMVIGFVILAIIINCGGAGDRRYIGAEYWHNPGPFAHGFKGVCTVFCYAAFSYGGIEVLLLSAAEQENPTKSIPNACKKVVYRILLIYMLTTILVCFLVPYNSDELLGSSDSSGSHASPFVIAVASHGVKVVPHFINAVILISVISVANSSLYSGPRLLLSLAEQGVLPKCLAYVDRNGRPLLCFFVSLVFGCIGFVATSDAEEQVFTWLLAISSLSQLFIWMSMSLSHIRFRDAMAKQGRSMNEVGYKAQTGYWGSWLAVLIAIFFLVCQFWVAIAPVNEHGKLNVKVFFQNYLAMPIVLFAYFGHKIYFKSWSFWIPAEKIDLDSHRNIFVSPSLTEIDKVDDNDDLKEYENSESSENPNSSRSRKFFKRMTNFWC.

The interval 1-57 (MDDSVSFIAKEASPAQYSHSLHERTHSEKQKRDFTITEKQDEVSGQTAEPRRTDSKS) is disordered. Residues 1 to 99 (MDDSVSFIAK…LTKSIKSRHL (99 aa)) are Cytoplasmic-facing. Position 13 is a phosphoserine (serine 13). The span at 20-42 (SLHERTHSEKQKRDFTITEKQDE) shows a compositional bias: basic and acidic residues. A Glycyl lysine isopeptide (Lys-Gly) (interchain with G-Cter in ubiquitin) cross-link involves residue lysine 39. Phosphoserine is present on residues serine 80 and serine 84. The chain crosses the membrane as a helical span at residues 100-120 (VMISLGTGIGTGLLVGNGQVL). At 121–122 (GT) the chain is on the extracellular side. A helical membrane pass occupies residues 123–143 (AGPAGLVLGYGIASIMLYCII). At 144-172 (QAAGELGLCYAGLTGNYTRYPSILVDPSL) the chain is on the cytoplasmic side. The chain crosses the membrane as a helical span at residues 173-193 (GFAVSVVYTIQWLTVLPLQLV). Topologically, residues 194-204 (TAAMTVKYWTS) are extracellular. Residues 205 to 225 (VNADIFVAVVFVFVIIINLFG) traverse the membrane as a helical segment. Topologically, residues 226–233 (SRGYAEAE) are cytoplasmic. The chain crosses the membrane as a helical span at residues 234-254 (FIFNSCKILMVIGFVILAIII). Over 255–281 (NCGGAGDRRYIGAEYWHNPGPFAHGFK) the chain is Extracellular. Residues 282 to 302 (GVCTVFCYAAFSYGGIEVLLL) form a helical membrane-spanning segment. Topologically, residues 303-320 (SAAEQENPTKSIPNACKK) are cytoplasmic. Residues 321–341 (VVYRILLIYMLTTILVCFLVP) traverse the membrane as a helical segment. Over 342–368 (YNSDELLGSSDSSGSHASPFVIAVASH) the chain is Extracellular. A helical transmembrane segment spans residues 369 to 389 (GVKVVPHFINAVILISVISVA). The Cytoplasmic portion of the chain corresponds to 390 to 422 (NSSLYSGPRLLLSLAEQGVLPKCLAYVDRNGRP). Residues 423 to 443 (LLCFFVSLVFGCIGFVATSDA) traverse the membrane as a helical segment. Over 444–446 (EEQ) the chain is Extracellular. Residues 447 to 467 (VFTWLLAISSLSQLFIWMSMS) form a helical membrane-spanning segment. The Cytoplasmic segment spans residues 468–499 (LSHIRFRDAMAKQGRSMNEVGYKAQTGYWGSW). The helical transmembrane segment at 500–520 (LAVLIAIFFLVCQFWVAIAPV) threads the bilayer. Residues 521-529 (NEHGKLNVK) are Extracellular-facing. A helical transmembrane segment spans residues 530-550 (VFFQNYLAMPIVLFAYFGHKI). The Cytoplasmic segment spans residues 551–619 (YFKSWSFWIP…FFKRMTNFWC (69 aa)).

It belongs to the amino acid-polyamine-organocation (APC) superfamily. YAT (TC 2.A.3.10) family.

The protein localises to the membrane. Functionally, high-affinity transport of valine and tyrosine. Low-affinity transport of tryptophan. Can also transport L-cysteine. The sequence is that of Valine/tyrosine/tryptophan amino-acid permease 1 (TAT1) from Saccharomyces cerevisiae (strain ATCC 204508 / S288c) (Baker's yeast).